Reading from the N-terminus, the 125-residue chain is Large ribosomal subunit protein bL12 (125 aa).

The protein belongs to the bacterial ribosomal protein bL12 family. As to quaternary structure, homodimer. Part of the ribosomal stalk of the 50S ribosomal subunit. Forms a multimeric L10(L12)X complex, where L10 forms an elongated spine to which 2 to 4 L12 dimers bind in a sequential fashion. Binds GTP-bound translation factors.

Functionally, forms part of the ribosomal stalk which helps the ribosome interact with GTP-bound translation factors. Is thus essential for accurate translation. The polypeptide is Large ribosomal subunit protein bL12 (Granulibacter bethesdensis (strain ATCC BAA-1260 / CGDNIH1)).